A 341-amino-acid polypeptide reads, in one-letter code: S-adenosylmethionine:tRNA ribosyltransferase-isomerase (341 aa).

The protein belongs to the QueA family. As to quaternary structure, monomer.

The protein localises to the cytoplasm. The catalysed reaction is 7-aminomethyl-7-carbaguanosine(34) in tRNA + S-adenosyl-L-methionine = epoxyqueuosine(34) in tRNA + adenine + L-methionine + 2 H(+). It participates in tRNA modification; tRNA-queuosine biosynthesis. Functionally, transfers and isomerizes the ribose moiety from AdoMet to the 7-aminomethyl group of 7-deazaguanine (preQ1-tRNA) to give epoxyqueuosine (oQ-tRNA). This chain is S-adenosylmethionine:tRNA ribosyltransferase-isomerase, found in Staphylococcus aureus (strain Mu3 / ATCC 700698).